The following is a 556-amino-acid chain: 2-methylpropanoate--CoA ligase CCL4 (556 aa).

ATP contacts are provided by residues 192-200 (TSGTTSSPK), 325-330 (HGYGLT), Asp423, 435-438 (IKDR), and Lys531. The SBD1 stretch occupies residues 260-325 (DSEIIYDMIK…TESLGFAVSH (66 aa)). An SBD2 region spans residues 326-402 (GYGLTETAGL…LRGGSVMLGY (77 aa)).

The protein belongs to the ATP-dependent AMP-binding enzyme family. Mostly expressed in old leaves and in cones and glandular trichomes (lupulin glands) after flowering, and, to a lower extent, in stems, young leaves and flowers.

It localises to the cytoplasm. The protein localises to the cytosol. It carries out the reaction 2-methylpropanoate + ATP + CoA = 2-methylpropanoyl-CoA + AMP + diphosphate. The catalysed reaction is propanoate + ATP + CoA = propanoyl-CoA + AMP + diphosphate. The enzyme catalyses butanoate + ATP + CoA = butanoyl-CoA + AMP + diphosphate. It catalyses the reaction 2-methylbutanoate + ATP + CoA = 2-methylbutanoyl-CoA + AMP + diphosphate. The protein operates within secondary metabolite biosynthesis. Its function is as follows. Involved in the biosynthesis of prenylated phenolics natural products which contribute to the bitter taste of beer and display broad biological activities. Catalyzes the ligation of CoA on 2-methylpropanoate (isobutyric acid) and 2-methylbutanoate to produce 2-methylpropanoyl-CoA and 2-methylbutanoyl-CoA, respectively. Can also use propanoate and butanoate as substrates with a lower efficiency. This chain is 2-methylpropanoate--CoA ligase CCL4, found in Humulus lupulus (European hop).